The sequence spans 186 residues: Glycerol-3-phosphate acyltransferase 1 (186 aa).

Helical transmembrane passes span 9–29 (MQFL…AYIV), 58–78 (GYFV…VSIA), 85–105 (STFV…PVLF), 121–141 (IAFD…FYLI), and 161–181 (ILYS…VLIL).

It belongs to the PlsY family. As to quaternary structure, probably interacts with PlsX.

The protein resides in the cell membrane. It catalyses the reaction an acyl phosphate + sn-glycerol 3-phosphate = a 1-acyl-sn-glycero-3-phosphate + phosphate. The protein operates within lipid metabolism; phospholipid metabolism. Its function is as follows. Catalyzes the transfer of an acyl group from acyl-phosphate (acyl-PO(4)) to glycerol-3-phosphate (G3P) to form lysophosphatidic acid (LPA). This enzyme utilizes acyl-phosphate as fatty acyl donor, but not acyl-CoA or acyl-ACP. The sequence is that of Glycerol-3-phosphate acyltransferase 1 from Bacillus cereus (strain ZK / E33L).